Here is a 351-residue protein sequence, read N- to C-terminus: Nicotinate-nucleotide--dimethylbenzimidazole phosphoribosyltransferase (351 aa).

E315 serves as the catalytic Proton acceptor.

It belongs to the CobT family.

The enzyme catalyses 5,6-dimethylbenzimidazole + nicotinate beta-D-ribonucleotide = alpha-ribazole 5'-phosphate + nicotinate + H(+). The protein operates within nucleoside biosynthesis; alpha-ribazole biosynthesis; alpha-ribazole from 5,6-dimethylbenzimidazole: step 1/2. Functionally, catalyzes the synthesis of alpha-ribazole-5'-phosphate from nicotinate mononucleotide (NAMN) and 5,6-dimethylbenzimidazole (DMB). The polypeptide is Nicotinate-nucleotide--dimethylbenzimidazole phosphoribosyltransferase (Acetivibrio thermocellus (strain ATCC 27405 / DSM 1237 / JCM 9322 / NBRC 103400 / NCIMB 10682 / NRRL B-4536 / VPI 7372) (Clostridium thermocellum)).